The sequence spans 213 residues: ATP-dependent Clp protease proteolytic subunit 3 (213 aa).

Ser-107 (nucleophile) is an active-site residue. The active site involves His-132.

The protein belongs to the peptidase S14 family. Fourteen ClpP subunits assemble into 2 heptameric rings which stack back to back to give a disk-like structure with a central cavity, resembling the structure of eukaryotic proteasomes.

Its subcellular location is the cytoplasm. It carries out the reaction Hydrolysis of proteins to small peptides in the presence of ATP and magnesium. alpha-casein is the usual test substrate. In the absence of ATP, only oligopeptides shorter than five residues are hydrolyzed (such as succinyl-Leu-Tyr-|-NHMec, and Leu-Tyr-Leu-|-Tyr-Trp, in which cleavage of the -Tyr-|-Leu- and -Tyr-|-Trp bonds also occurs).. Its function is as follows. Cleaves peptides in various proteins in a process that requires ATP hydrolysis. Has a chymotrypsin-like activity. Plays a major role in the degradation of misfolded proteins. This Frankia casuarinae (strain DSM 45818 / CECT 9043 / HFP020203 / CcI3) protein is ATP-dependent Clp protease proteolytic subunit 3.